The sequence spans 128 residues: 3-aminoacrylate deaminase RutC (128 aa).

Belongs to the RutC family.

The catalysed reaction is (Z)-3-aminoacrylate + H2O + H(+) = 3-oxopropanoate + NH4(+). Involved in pyrimidine catabolism. Catalyzes the deamination of 3-aminoacrylate to malonic semialdehyde, a reaction that can also occur spontaneously. RutC may facilitate the reaction and modulate the metabolic fitness, rather than catalyzing essential functions. The protein is 3-aminoacrylate deaminase RutC of Azorhizobium caulinodans (strain ATCC 43989 / DSM 5975 / JCM 20966 / LMG 6465 / NBRC 14845 / NCIMB 13405 / ORS 571).